The following is a 448-amino-acid chain: Exodeoxyribonuclease 7 large subunit (448 aa).

Belongs to the XseA family. Heterooligomer composed of large and small subunits.

It localises to the cytoplasm. It catalyses the reaction Exonucleolytic cleavage in either 5'- to 3'- or 3'- to 5'-direction to yield nucleoside 5'-phosphates.. In terms of biological role, bidirectionally degrades single-stranded DNA into large acid-insoluble oligonucleotides, which are then degraded further into small acid-soluble oligonucleotides. This is Exodeoxyribonuclease 7 large subunit from Bacillus pumilus (strain SAFR-032).